The following is a 757-amino-acid chain: Probable tRNA (uracil-O(2)-)-methyltransferase (757 aa).

2 disordered regions span residues 55–93 (EARG…GPEQ) and 108–138 (QQEE…GDFP). Positions 72–84 (PGPGQGSPGGGPG) are enriched in gly residues. S78 is subject to Phosphoserine. Basic and acidic residues predominate over residues 123 to 136 (DSGHPGHAEGREGD). S533 is subject to Phosphoserine. The segment at 713 to 743 (ACKTRLCWFFMHHPDGCALSTDCCPFAHGPA) adopts a C3H1-type zinc-finger fold.

This sequence belongs to the TRM44 family.

Its subcellular location is the cytoplasm. It catalyses the reaction uridine(44) in tRNA(Ser) + S-adenosyl-L-methionine = 2'-O-methyluridine(44) in tRNA(Ser) + S-adenosyl-L-homocysteine + H(+). Functionally, probable adenosyl-L-methionine (AdoMet)-dependent tRNA (uracil-O(2)-)-methyltransferase. This chain is Probable tRNA (uracil-O(2)-)-methyltransferase (TRMT44), found in Homo sapiens (Human).